The primary structure comprises 108 residues: MTRKIFTNTRERWRQQNVNSAFAKLRKLIPTHPPDKKLSKNETLRLAMRYINFLVKVLGEQSLQQTGVAAQGNILGLFPQGPHLPGLEDRTLLENYQVPSPGPSHHIP.

The 53-residue stretch at 2 to 54 folds into the bHLH domain; sequence TRKIFTNTRERWRQQNVNSAFAKLRKLIPTHPPDKKLSKNETLRLAMRYINFL. The segment at 89-108 is disordered; that stretch reads DRTLLENYQVPSPGPSHHIP.

The polypeptide is T-cell acute lymphocytic leukemia protein 2 (TAL2) (Homo sapiens (Human)).